The chain runs to 92 residues: UPF0473 protein BC_4380 (92 aa).

The protein belongs to the UPF0473 family.

In Bacillus cereus (strain ATCC 14579 / DSM 31 / CCUG 7414 / JCM 2152 / NBRC 15305 / NCIMB 9373 / NCTC 2599 / NRRL B-3711), this protein is UPF0473 protein BC_4380.